The sequence spans 615 residues: 1-deoxy-D-xylulose-5-phosphate synthase (615 aa).

Thiamine diphosphate-binding positions include histidine 72 and 113–115 (GHA). A Mg(2+)-binding site is contributed by aspartate 144. Residues 145-146 (GA), asparagine 173, tyrosine 281, and glutamate 360 each bind thiamine diphosphate. Residue asparagine 173 participates in Mg(2+) binding.

Belongs to the transketolase family. DXPS subfamily. Homodimer. The cofactor is Mg(2+). Requires thiamine diphosphate as cofactor.

It catalyses the reaction D-glyceraldehyde 3-phosphate + pyruvate + H(+) = 1-deoxy-D-xylulose 5-phosphate + CO2. The protein operates within metabolic intermediate biosynthesis; 1-deoxy-D-xylulose 5-phosphate biosynthesis; 1-deoxy-D-xylulose 5-phosphate from D-glyceraldehyde 3-phosphate and pyruvate: step 1/1. Its function is as follows. Catalyzes the acyloin condensation reaction between C atoms 2 and 3 of pyruvate and glyceraldehyde 3-phosphate to yield 1-deoxy-D-xylulose-5-phosphate (DXP). In Thermus thermophilus (strain ATCC BAA-163 / DSM 7039 / HB27), this protein is 1-deoxy-D-xylulose-5-phosphate synthase.